Reading from the N-terminus, the 361-residue chain is F-box protein pof7 (361 aa).

In terms of domain architecture, F-box spans 105–157 (NESVVPNILKLPDEVLLVILENCIRDLHDLRYLSSIALTCKHFAKALRADSLY).

As to quaternary structure, interacts with skp1.

The protein resides in the cytoplasm. The polypeptide is F-box protein pof7 (pof7) (Schizosaccharomyces pombe (strain 972 / ATCC 24843) (Fission yeast)).